The chain runs to 362 residues: MAHHDPIHLIAPRAGLAQLNERSRDIFRQIVESYLATGEPVGSRNISRLIAMPLSPASVRNVMADLEQLGLIYAPHTSAGRLPTELGLRFFVDALMQVGDLNDAERQSIQSQLTSVGQAQSVEAALDQALTRLSGLTRAAAVVLTPKSNARLKHIEFVRLEPEKALVILVGEDGQVENRVLTLPPGVPSSAITEAGNFLNSRIRGRTLAEARLELETALGEARAELDQLTQKVISAGIASWSGGENEDRQLIVRGHANLLEDLHALEDLERVRLLFDDLETKRGVIDLLGRAETAEGVRIFIGSENKLFSLSGSSTIISPYRDAAGHIVGVLGVIGPTRLNYARVIPTVDYAARIVSRLLGG.

This sequence belongs to the HrcA family.

Functionally, negative regulator of class I heat shock genes (grpE-dnaK-dnaJ and groELS operons). Prevents heat-shock induction of these operons. The protein is Heat-inducible transcription repressor HrcA of Bradyrhizobium diazoefficiens (strain JCM 10833 / BCRC 13528 / IAM 13628 / NBRC 14792 / USDA 110).